The chain runs to 482 residues: 23S rRNA (uracil(1939)-C(5))-methyltransferase RlmD (482 aa).

Residues 1–33 form a disordered region; sequence MANLFKQSRAKQKNKTTPSQTQTSTKGSARANA. Residues 15-28 are compositionally biased toward low complexity; it reads KTTPSQTQTSTKGS. The TRAM domain maps to 51–108; it reads TAQDANNNAITIQELDWMGQGVARGATMYFVEGALPGETCDIEVVSSKKKVVSAKTIS. Residues Cys-121, Cys-127, Cys-130, and Cys-208 each coordinate [4Fe-4S] cluster. 6 residues coordinate S-adenosyl-L-methionine: Gln-313, Phe-342, Asn-347, Glu-363, Asp-390, and Asp-411. Cys-437 functions as the Nucleophile in the catalytic mechanism.

This sequence belongs to the class I-like SAM-binding methyltransferase superfamily. RNA M5U methyltransferase family. RlmD subfamily.

It carries out the reaction uridine(1939) in 23S rRNA + S-adenosyl-L-methionine = 5-methyluridine(1939) in 23S rRNA + S-adenosyl-L-homocysteine + H(+). Functionally, catalyzes the formation of 5-methyl-uridine at position 1939 (m5U1939) in 23S rRNA. This Alteromonas mediterranea (strain DSM 17117 / CIP 110805 / LMG 28347 / Deep ecotype) protein is 23S rRNA (uracil(1939)-C(5))-methyltransferase RlmD.